The following is a 383-amino-acid chain: Caspase a (383 aa).

Residues 1–142 (MAKSIKDHLQ…ETYEIKDKSV (142 aa)) constitute a propeptide that is removed on maturation. Residues 8-81 (HLQDALSNIG…RGIKCNAVAE (74 aa)) enclose the Pyrin domain. The interval 87-106 (TGQGGVSQPEPPVPEPIPKD) is disordered. Residues H220 and C270 contribute to the active site. Residues 275–296 (HGRVWASDGEPDEPIEIEDDDF) constitute a propeptide that is removed on maturation.

Belongs to the peptidase C14A family. As to quaternary structure, heterotetramer that consists of two anti-parallel arranged heterodimers, each one formed by a 20 kDa (p20) and a 10 kDa (p10) subunit. Interacts (via pyrin domain) with pycard (via pyrin domain). Interacts with caspb. Component of NLRP1 inflammasomes. Inflammasomes are supramolecular complexes that assemble in the cytosol in response to pathogens and other damage-associated signals and play critical roles in innate immunity and inflammation. The NLRP1 inflammasome is composed of the signal sensor nlrp1, and the adapter pycard (asc), which recruit effector pro-inflammatory caspases caspa and/or caspb. The interaction between nlrp1 and pycard is required for the sequential recruitment of caspa and then caspb. Caspa is preferentially recruited first and this causes the cleavage of pro-il1b into the midformed il1b. This is followed by the recruitment of caspb, which is activated and cleaves the midformed il1b resulting in il1b maturation. Interacts with caiap. Post-translationally, the two subunits are derived from the precursor sequence by an autocatalytic mechanism.

The protein resides in the inflammasome. It localises to the cytoplasm. It carries out the reaction Strict requirement for an Asp residue at position P1 and has a preferred cleavage sequence of Tyr-Val-Ala-Asp-|-.. In terms of biological role, thiol protease which cleaves IL-1 beta (il1b), releasing the mature cytokine which is involved in a variety of inflammatory processes, and mediates apoptosis. Component of the NLRP1 inflammasome, which plays a crucial role in innate immunity and inflammation. In response to pathogens and other damage-associated signals, recruited to the NLRP1 inflammasome in its precursor form. Its subsequent activation causes the cleavage of pro-il1b into the midformed il1b, which then evetually leads to il1b maturation and secretion in the extracellular milieu. Required for the development of the cartilaginous pharyngeal skeleton. The chain is Caspase a from Danio rerio (Zebrafish).